A 399-amino-acid polypeptide reads, in one-letter code: Rhodopsin, G0-coupled (399 aa).

The Extracellular portion of the chain corresponds to 1 to 17; the sequence is MPFPLNRTDTALVISPS. A glycan (N-linked (GlcNAc...) asparagine) is linked at N6. The helical transmembrane segment at 18 to 43 threads the bilayer; sequence EFRIIGIFISICCIIGVLGNLLIIIV. The Cytoplasmic segment spans residues 44–55; the sequence is FAKRRSVRRPIN. Residues 56 to 81 traverse the membrane as a helical segment; it reads FFVLNLAVSDLIVALLGYPMTAASAF. The Extracellular segment spans residues 82–95; it reads SNRWIFDNIGCKIY. C92 and C169 form a disulfide bridge. The helical transmembrane segment at 96 to 115 threads the bilayer; sequence AFLCFNSGVISIMTHAALSF. Residues 116–134 are Cytoplasmic-facing; that stretch reads CRYIIICQYGYRKKITQTT. A helical transmembrane segment spans residues 135-158; sequence VLRTLFSIWSFAMFWTLSPLFGWS. The Extracellular segment spans residues 159–182; it reads SYVIEVVPVSCSVNWYGHGLGDVS. The chain crosses the membrane as a helical span at residues 183–210; that stretch reads YTISVIVAVYVFPLSIIVFSYGMILQEK. The Cytoplasmic portion of the chain corresponds to 211–240; the sequence is VCKDSRKNGIRAQQRYTPRFIQDIEQRVTF. Residues 241 to 263 traverse the membrane as a helical segment; it reads ISFLMMAAFMVAWTPYAIMSALA. At 264–271 the chain is on the extracellular side; it reads IGSFNVEN. Residues 272-295 form a helical membrane-spanning segment; sequence SFAALPTLFAKASCAYNPFIYAFT. The residue at position 282 (K282) is an N6-(retinylidene)lysine. Over 296–399 the chain is Cytoplasmic; the sequence is NANFRDTVVE…NTFTADFSVI (104 aa).

This sequence belongs to the G-protein coupled receptor 1 family. Opsin subfamily. Post-translationally, phosphorylated on some or all of the serine and threonine residues present in the C-terminal region. In terms of tissue distribution, retina. Expressed in the hyperpolarizing cell layer of the photoreceptor cells with its photoreceptive region adjacent to the lens.

It is found in the membrane. Visual pigments are the light-absorbing molecules that mediate vision. They consist of an apoprotein, opsin, covalently linked to cis-retinal. This Mizuhopecten yessoensis (Japanese scallop) protein is Rhodopsin, G0-coupled (SCOP2).